A 161-amino-acid polypeptide reads, in one-letter code: General odorant-binding protein 2 (161 aa).

The N-terminal stretch at 1–20 is a signal peptide; it reads MVNRLILMVVVVFITDSVMG. Disulfide bonds link Cys-39–Cys-74, Cys-70–Cys-128, and Cys-117–Cys-137.

It belongs to the PBP/GOBP family. In terms of assembly, homodimer. As to expression, olfactory tissue; expressed by the glia-like support cells that ensheathe the sensory neurons and line the base of the sensillum lumen.

In terms of biological role, present in the aqueous fluid surrounding olfactory sensory dendrites and are thought to aid in the capture and transport of hydrophobic odorants into and through this fluid. This Manduca sexta (Tobacco hawkmoth) protein is General odorant-binding protein 2 (GOBP2).